A 138-amino-acid polypeptide reads, in one-letter code: Phospholipase A2 EC3 (138 aa).

Positions 1–16 (MRTLWIVAVWLMGVEG) are cleaved as a signal peptide. 7 disulfides stabilise this stretch: Cys-42-Cys-131, Cys-44-Cys-60, Cys-59-Cys-111, Cys-65-Cys-138, Cys-66-Cys-104, Cys-73-Cys-97, and Cys-91-Cys-102. Residues Tyr-43, Gly-45, and Gly-47 each coordinate Ca(2+). Residue His-63 is part of the active site. Residue Asp-64 coordinates Ca(2+). Residue Asp-105 is part of the active site.

The protein belongs to the phospholipase A2 family. Group II subfamily. It depends on Ca(2+) as a cofactor.

It localises to the secreted. It catalyses the reaction a 1,2-diacyl-sn-glycero-3-phosphocholine + H2O = a 1-acyl-sn-glycero-3-phosphocholine + a fatty acid + H(+). Its function is as follows. PA2 catalyzes the calcium-dependent hydrolysis of the 2-acyl groups in 3-sn-phosphoglycerides. This chain is Phospholipase A2 EC3, found in Echis coloratus (Carpet viper).